Consider the following 431-residue polypeptide: Enolase (431 aa).

Glutamine 167 contacts (2R)-2-phosphoglycerate. The active-site Proton donor is the glutamate 209. Mg(2+)-binding residues include aspartate 246, glutamate 289, and aspartate 316. (2R)-2-phosphoglycerate-binding residues include lysine 341, arginine 370, serine 371, and lysine 392. Residue lysine 341 is the Proton acceptor of the active site.

It belongs to the enolase family. Component of the RNA degradosome, a multiprotein complex involved in RNA processing and mRNA degradation. Mg(2+) serves as cofactor.

It localises to the cytoplasm. The protein resides in the secreted. It is found in the cell surface. The enzyme catalyses (2R)-2-phosphoglycerate = phosphoenolpyruvate + H2O. It functions in the pathway carbohydrate degradation; glycolysis; pyruvate from D-glyceraldehyde 3-phosphate: step 4/5. Functionally, catalyzes the reversible conversion of 2-phosphoglycerate (2-PG) into phosphoenolpyruvate (PEP). It is essential for the degradation of carbohydrates via glycolysis. In Shewanella denitrificans (strain OS217 / ATCC BAA-1090 / DSM 15013), this protein is Enolase.